We begin with the raw amino-acid sequence, 522 residues long: Lysine--tRNA ligase (522 aa).

Positions 44–52 (PSGLPHIGT) match the 'HIGH' region motif. Positions 290–294 (KISKS) match the 'KMSKS' region motif. Lys293 is a binding site for ATP.

This sequence belongs to the class-I aminoacyl-tRNA synthetase family.

Its subcellular location is the cytoplasm. The catalysed reaction is tRNA(Lys) + L-lysine + ATP = L-lysyl-tRNA(Lys) + AMP + diphosphate. This chain is Lysine--tRNA ligase, found in Rickettsia rickettsii (strain Iowa).